A 438-amino-acid polypeptide reads, in one-letter code: Adenosylhomocysteinase (438 aa).

Substrate-binding residues include T64, D139, and E164. T165–T167 is an NAD(+) binding site. Substrate is bound by residues K194 and D198. NAD(+) contacts are provided by residues N199, G228–G233, E251, N286, I307–H309, and N352.

Belongs to the adenosylhomocysteinase family. It depends on NAD(+) as a cofactor.

It localises to the cytoplasm. It carries out the reaction S-adenosyl-L-homocysteine + H2O = L-homocysteine + adenosine. The protein operates within amino-acid biosynthesis; L-homocysteine biosynthesis; L-homocysteine from S-adenosyl-L-homocysteine: step 1/1. Functionally, may play a key role in the regulation of the intracellular concentration of adenosylhomocysteine. In Coxiella burnetii (strain CbuK_Q154) (Coxiella burnetii (strain Q154)), this protein is Adenosylhomocysteinase.